The following is a 436-amino-acid chain: O-phosphoseryl-tRNA(Sec) selenium transferase (436 aa).

Residues 1 to 44 (MLDFNIEGLIPKNMEKRGELVLNEYLKEIEDVFNHRKIPENGID) are tetramerization. Arg72 provides a ligand contact to pyridoxal 5'-phosphate. Residues 93–103 (GRSGNLVDPQP) are phosphate loop (P-loop). Residues Arg94, Ser95, and Gln102 each coordinate substrate. Lys278 bears the N6-(pyridoxal phosphate)lysine mark. Residue Arg307 participates in substrate binding.

It belongs to the SepSecS family. In terms of assembly, homotetramer. Pyridoxal 5'-phosphate serves as cofactor.

The enzyme catalyses O-phospho-L-seryl-tRNA(Sec) + selenophosphate + H2O = L-selenocysteinyl-tRNA(Sec) + 2 phosphate. Its pathway is aminoacyl-tRNA biosynthesis; selenocysteinyl-tRNA(Sec) biosynthesis; selenocysteinyl-tRNA(Sec) from L-seryl-tRNA(Sec) (archaeal/eukaryal route): step 2/2. In terms of biological role, converts O-phosphoseryl-tRNA(Sec) to selenocysteinyl-tRNA(Sec) required for selenoprotein biosynthesis. The sequence is that of O-phosphoseryl-tRNA(Sec) selenium transferase (spcS) from Methanococcus maripaludis (strain DSM 14266 / JCM 13030 / NBRC 101832 / S2 / LL).